We begin with the raw amino-acid sequence, 365 residues long: Histidinol-phosphate aminotransferase (365 aa).

Position 222 is an N6-(pyridoxal phosphate)lysine (Lys-222).

This sequence belongs to the class-II pyridoxal-phosphate-dependent aminotransferase family. Histidinol-phosphate aminotransferase subfamily. In terms of assembly, homodimer. Requires pyridoxal 5'-phosphate as cofactor.

The catalysed reaction is L-histidinol phosphate + 2-oxoglutarate = 3-(imidazol-4-yl)-2-oxopropyl phosphate + L-glutamate. It participates in amino-acid biosynthesis; L-histidine biosynthesis; L-histidine from 5-phospho-alpha-D-ribose 1-diphosphate: step 7/9. The sequence is that of Histidinol-phosphate aminotransferase from Geobacillus thermodenitrificans (strain NG80-2).